The chain runs to 161 residues: MPSFDVVSEANMIEVKNAIEQSNKEISTRFDFKGSDARVEQKERELTLFADDDFKLGQVKDVLINKLAKRNVDVRFLDYGKVEKIGGDKVKQIVTVKKGVTGDLAKKIVRLVKDSKIKVQASIQGDAVRVTGTKRDDLQSVIAMLRKDVTDTPLDFNNFRD.

It belongs to the YajQ family.

Functionally, nucleotide-binding protein. This is Nucleotide-binding protein BamMC406_2474 from Burkholderia ambifaria (strain MC40-6).